The chain runs to 211 residues: MSLSDIQQAILSLITNHINADGVSPSQTEIARAFGFKGVRAVQHHLDVLEQQGMIRRVPRQARGIRLKHLTEVDETALALQSEDVLRLPVLGRVAAGQPIGADIGEGRVVLLDRVFFSPAPDYLLRVQGDSMRDEGIFDGDLIGVHRTQDAHSGQIVVARIDDEITVKLLKISKDRIRLLPRNPDFAPIEVRSDQDFAIEGLYCGLLRPNR.

Residues 27 to 47 constitute a DNA-binding region (H-T-H motif); sequence QTEIARAFGFKGVRAVQHHLD. Catalysis depends on for autocatalytic cleavage activity residues serine 131 and lysine 168.

The protein belongs to the peptidase S24 family. As to quaternary structure, homodimer.

The enzyme catalyses Hydrolysis of Ala-|-Gly bond in repressor LexA.. In terms of biological role, represses a number of genes involved in the response to DNA damage (SOS response), including recA and lexA. In the presence of single-stranded DNA, RecA interacts with LexA causing an autocatalytic cleavage which disrupts the DNA-binding part of LexA, leading to derepression of the SOS regulon and eventually DNA repair. In Xylella fastidiosa (strain 9a5c), this protein is LexA repressor.